The following is a 369-amino-acid chain: Glutamate 5-kinase (369 aa).

Lys-9 is an ATP binding site. Residues Ser-49, Asp-136, and Asn-148 each coordinate substrate. ATP-binding positions include 168–169 (TD) and 210–216 (TGGMLTK). Positions 275–355 (QGSIWVDKGA…KGVLIYRDDW (81 aa)) constitute a PUA domain.

This sequence belongs to the glutamate 5-kinase family.

It is found in the cytoplasm. The catalysed reaction is L-glutamate + ATP = L-glutamyl 5-phosphate + ADP. The protein operates within amino-acid biosynthesis; L-proline biosynthesis; L-glutamate 5-semialdehyde from L-glutamate: step 1/2. In terms of biological role, catalyzes the transfer of a phosphate group to glutamate to form L-glutamate 5-phosphate. The chain is Glutamate 5-kinase from Streptococcus pneumoniae (strain 70585).